Reading from the N-terminus, the 308-residue chain is Porphobilinogen deaminase (308 aa).

An S-(dipyrrolylmethanemethyl)cysteine modification is found at cysteine 243.

Belongs to the HMBS family. Monomer. It depends on dipyrromethane as a cofactor.

The enzyme catalyses 4 porphobilinogen + H2O = hydroxymethylbilane + 4 NH4(+). It participates in porphyrin-containing compound metabolism; protoporphyrin-IX biosynthesis; coproporphyrinogen-III from 5-aminolevulinate: step 2/4. Tetrapolymerization of the monopyrrole PBG into the hydroxymethylbilane pre-uroporphyrinogen in several discrete steps. This chain is Porphobilinogen deaminase, found in Nitrosomonas europaea (strain ATCC 19718 / CIP 103999 / KCTC 2705 / NBRC 14298).